Reading from the N-terminus, the 307-residue chain is Olfactory receptor 8K5 (307 aa).

Topologically, residues Met-1–Ile-25 are extracellular. N-linked (GlcNAc...) asparagine glycosylation is present at Asn-5. Residues Pro-26–Ile-46 traverse the membrane as a helical segment. Residues Ile-47–His-54 are Cytoplasmic-facing. Residues Leu-55–Thr-75 form a helical membrane-spanning segment. Residues Val-76–Ala-99 lie on the Extracellular side of the membrane. Cys-97 and Cys-189 are disulfide-bonded. A helical membrane pass occupies residues Gln-100 to Tyr-120. Over Asp-121 to Arg-139 the chain is Cytoplasmic. The helical transmembrane segment at Leu-140–Thr-160 threads the bilayer. Residues Ile-161–Leu-197 lie on the Extracellular side of the membrane. A helical membrane pass occupies residues Leu-198 to Ser-217. Topologically, residues Tyr-218–Ala-237 are cytoplasmic. Residues Phe-238–Met-258 form a helical membrane-spanning segment. The Extracellular portion of the chain corresponds to Tyr-259–Asp-271. Asn-263 carries an N-linked (GlcNAc...) asparagine glycan. The helical transmembrane segment at Lys-272–Leu-292 threads the bilayer. The Cytoplasmic portion of the chain corresponds to Arg-293–Asn-307.

It belongs to the G-protein coupled receptor 1 family.

Its subcellular location is the cell membrane. Odorant receptor. The chain is Olfactory receptor 8K5 (OR8K5) from Homo sapiens (Human).